The chain runs to 285 residues: 4-diphosphocytidyl-2-C-methyl-D-erythritol kinase (285 aa).

K9 is a catalytic residue. Position 89 to 99 (89 to 99 (PLGAGLGGGSS)) interacts with ATP. D131 is a catalytic residue.

The protein belongs to the GHMP kinase family. IspE subfamily.

It catalyses the reaction 4-CDP-2-C-methyl-D-erythritol + ATP = 4-CDP-2-C-methyl-D-erythritol 2-phosphate + ADP + H(+). It participates in isoprenoid biosynthesis; isopentenyl diphosphate biosynthesis via DXP pathway; isopentenyl diphosphate from 1-deoxy-D-xylulose 5-phosphate: step 3/6. Its function is as follows. Catalyzes the phosphorylation of the position 2 hydroxy group of 4-diphosphocytidyl-2C-methyl-D-erythritol. In Thermodesulfovibrio yellowstonii (strain ATCC 51303 / DSM 11347 / YP87), this protein is 4-diphosphocytidyl-2-C-methyl-D-erythritol kinase.